A 187-amino-acid polypeptide reads, in one-letter code: UPF0301 protein YqgE (187 aa).

The protein belongs to the UPF0301 (AlgH) family.

This Salmonella paratyphi A (strain ATCC 9150 / SARB42) protein is UPF0301 protein YqgE.